A 408-amino-acid chain; its full sequence is Glycoprotein 55 (408 aa).

Residues 1-32 (MEGPAFSKPLKDKINPWGPLIILGILIRAGVS) form the signal peptide. Topologically, residues 33–385 (VQHDSPHQVF…LFNRSTWFTT (353 aa)) are virion surface. N-linked (GlcNAc...) asparagine; by host glycosylation is found at N43 and N58. The segment at 256 to 281 (RPPQPPPPGAASIVPETAPPSQQPGT) is disordered. N297 and N329 each carry an N-linked (GlcNAc...) asparagine; by host glycan. Positions 335–371 (KEECCFYADHTGLVRDSMAKLRERLTQRQKLFESSQG) form a coiled coil. A glycan (N-linked (GlcNAc...) asparagine; by host) is linked at N378. A helical transmembrane segment spans residues 386–406 (LIFTIIGPLIILLLILLFWTL). The Intravirion portion of the chain corresponds to 407–408 (HS).

The protein localises to the host endoplasmic reticulum membrane. The protein resides in the host cell membrane. Its subcellular location is the virion membrane. Envelope-like membrane glycoprotein. The sequence is that of Glycoprotein 55 (env) from Mus musculus (Mouse).